The following is a 454-amino-acid chain: Pup--protein ligase (454 aa).

Position 9 (E9) interacts with Mg(2+). ATP is bound at residue R53. Y55 provides a ligand contact to Mg(2+). The Proton acceptor role is filled by D57. E63 provides a ligand contact to Mg(2+). Positions 66 and 420 each coordinate ATP.

This sequence belongs to the Pup ligase/Pup deamidase family. Pup-conjugating enzyme subfamily.

It carries out the reaction ATP + [prokaryotic ubiquitin-like protein]-L-glutamate + [protein]-L-lysine = ADP + phosphate + N(6)-([prokaryotic ubiquitin-like protein]-gamma-L-glutamyl)-[protein]-L-lysine.. It functions in the pathway protein degradation; proteasomal Pup-dependent pathway. Its pathway is protein modification; protein pupylation. Its function is as follows. Catalyzes the covalent attachment of the prokaryotic ubiquitin-like protein modifier Pup to the proteasomal substrate proteins, thereby targeting them for proteasomal degradation. This tagging system is termed pupylation. The ligation reaction involves the side-chain carboxylate of the C-terminal glutamate of Pup and the side-chain amino group of a substrate lysine. The sequence is that of Pup--protein ligase from Pseudarthrobacter chlorophenolicus (strain ATCC 700700 / DSM 12829 / CIP 107037 / JCM 12360 / KCTC 9906 / NCIMB 13794 / A6) (Arthrobacter chlorophenolicus).